The sequence spans 523 residues: 2-isopropylmalate synthase (523 aa).

Positions 5 to 267 (VIIFDTTLRD…HTAINHQEIW (263 aa)) constitute a Pyruvate carboxyltransferase domain. 4 residues coordinate Mn(2+): aspartate 14, histidine 202, histidine 204, and asparagine 238. Positions 392 to 523 (RLDYFSVQSG…QHNENNKETV (132 aa)) are regulatory domain.

Belongs to the alpha-IPM synthase/homocitrate synthase family. LeuA type 1 subfamily. Homodimer. Mn(2+) serves as cofactor.

Its subcellular location is the cytoplasm. The enzyme catalyses 3-methyl-2-oxobutanoate + acetyl-CoA + H2O = (2S)-2-isopropylmalate + CoA + H(+). The protein operates within amino-acid biosynthesis; L-leucine biosynthesis; L-leucine from 3-methyl-2-oxobutanoate: step 1/4. Catalyzes the condensation of the acetyl group of acetyl-CoA with 3-methyl-2-oxobutanoate (2-ketoisovalerate) to form 3-carboxy-3-hydroxy-4-methylpentanoate (2-isopropylmalate). This Escherichia coli (strain SMS-3-5 / SECEC) protein is 2-isopropylmalate synthase.